The following is a 136-amino-acid chain: MSVGRRRGRILAFQALVAWDVGGAVLDDLLNFSWQNEDSIKDPNGYLFPKMMVLGTIENITEIDKVIQENLDNWVIDRLNSVDKAILRLSVYSLIYQKDTPPPIVIDEAINLAKDFGTDDSYKFVNAVLDSIKNKS.

This sequence belongs to the NusB family.

Involved in transcription antitermination. Required for transcription of ribosomal RNA (rRNA) genes. Binds specifically to the boxA antiterminator sequence of the ribosomal RNA (rrn) operons. The chain is Transcription antitermination protein NusB from Treponema denticola (strain ATCC 35405 / DSM 14222 / CIP 103919 / JCM 8153 / KCTC 15104).